We begin with the raw amino-acid sequence, 438 residues long: tRNA modification GTPase MnmE (438 aa).

(6S)-5-formyl-5,6,7,8-tetrahydrofolate contacts are provided by R19, E76, and K115. The TrmE-type G domain occupies 211-363 (GYKVAIIGRP…LSKELESYLN (153 aa)). GTP-binding positions include 221 to 226 (NVGKSS), 240 to 246 (SETAGTT), and 265 to 268 (DTAG). Mg(2+)-binding residues include S225 and T246. Residue K438 participates in (6S)-5-formyl-5,6,7,8-tetrahydrofolate binding.

This sequence belongs to the TRAFAC class TrmE-Era-EngA-EngB-Septin-like GTPase superfamily. TrmE GTPase family. As to quaternary structure, homodimer. Heterotetramer of two MnmE and two MnmG subunits. It depends on K(+) as a cofactor.

Its subcellular location is the cytoplasm. Exhibits a very high intrinsic GTPase hydrolysis rate. Involved in the addition of a carboxymethylaminomethyl (cmnm) group at the wobble position (U34) of certain tRNAs, forming tRNA-cmnm(5)s(2)U34. This chain is tRNA modification GTPase MnmE, found in Campylobacter fetus subsp. fetus (strain 82-40).